Consider the following 346-residue polypeptide: uncharacterized protein (346 aa).

An N-terminal signal peptide occupies residues 1 to 27; sequence MKFNKISLSVSTALLAAGLAVSGSANA.

This is an uncharacterized protein from Haemophilus influenzae (strain ATCC 51907 / DSM 11121 / KW20 / Rd).